The sequence spans 706 residues: Integrator complex subunit 13 (706 aa).

A disordered region spans residues 564 to 603 (PPEEEERKKRGRKREDKEDKSEKAVKDYEQEKSWQDSERL). A coiled-coil region spans residues 567–622 (EEERKKRGRKREDKEDKSEKAVKDYEQEKSWQDSERLKGILERGKEELAEAEIIKD). The Nuclear localization signal (NLS) signature appears at 572–582 (KRGRKREDKED). Lysine 611 participates in a covalent cross-link: Glycyl lysine isopeptide (Lys-Gly) (interchain with G-Cter in SUMO2). Positions 615–636 (AEAEIIKDSPDSPEPPNKKPLV) are enriched in basic and acidic residues. The segment at 615–650 (AEAEIIKDSPDSPEPPNKKPLVEMDETPQVEKSKGP) is disordered. Phosphoserine is present on residues serine 623, serine 626, and serine 678. The segment at 649–694 (GPVSLLSLWSNRINTANSRKHQEFAGRLNSVNNRAELYQHLKEENG) is cleavage module binding motif (CMBM).

The protein belongs to the Integrator subunit 13 family. In terms of assembly, component of the Integrator complex, composed of core subunits INTS1, INTS2, INTS3, INTS4, INTS5, INTS6, INTS7, INTS8, INTS9/RC74, INTS10, INTS11/CPSF3L, INTS12, INTS13, INTS14 and INTS15. The core complex associates with protein phosphatase 2A subunits PPP2CA and PPP2R1A, to form the Integrator-PP2A (INTAC) complex. INTS13 is part of the tail subcomplex, composed of INTS10, INTS13, INTS14 and INTS15. Interacts with transcription factors ZNF609 and ZNF655. Interacts with PAFAH1B1; this interaction may be required for proper recruitment of dynein complexes to the nuclear envelope at prophase. As to expression, widely expressed. Tends to be up-regulated in seminomas compared to normal testis.

It is found in the nucleus. The protein localises to the cytoplasm. Functionally, component of the integrator complex, a multiprotein complex that terminates RNA polymerase II (Pol II) transcription in the promoter-proximal region of genes. The integrator complex provides a quality checkpoint during transcription elongation by driving premature transcription termination of transcripts that are unfavorably configured for transcriptional elongation: the complex terminates transcription by (1) catalyzing dephosphorylation of the C-terminal domain (CTD) of Pol II subunit POLR2A/RPB1 and SUPT5H/SPT5, (2) degrading the exiting nascent RNA transcript via endonuclease activity and (3) promoting the release of Pol II from bound DNA. The integrator complex is also involved in terminating the synthesis of non-coding Pol II transcripts, such as enhancer RNAs (eRNAs), small nuclear RNAs (snRNAs), telomerase RNAs and long non-coding RNAs (lncRNAs). Within the integrator complex, INTS13 is part of the integrator tail module and acts as a platform for the recruitment of transcription factors at promoters. At prophase, mediates recruitment of cytoplasmic dynein to the nuclear envelope, a step important for proper centrosome-nucleus coupling. At G2/M phase, may be required for proper spindle formation and execution of cytokinesis. This chain is Integrator complex subunit 13, found in Homo sapiens (Human).